The following is a 246-amino-acid chain: Phycobilisome rod-core linker polypeptide CpcG2 (246 aa).

Residues Ser11 to Arg189 enclose the PBS-linker domain. Positions Asp224–Arg246 are disordered. Residues Ala235–Arg246 are compositionally biased toward polar residues.

The protein belongs to the phycobilisome linker protein family. The phycobilisome is a hemidiscoidal structure that is composed of two distinct substructures: a core complex and a number of rods radiating from the core.

It is found in the cellular thylakoid membrane. Rod-core linker protein required for attachment of phycocyanin to allophycocyanin in cores of phycobilisomes. In terms of biological role, linker polypeptides determine the state of aggregation and the location of the disk-shaped phycobiliprotein units within the phycobilisome and modulate their spectroscopic properties in order to mediate a directed and optimal energy transfer. The chain is Phycobilisome rod-core linker polypeptide CpcG2 (cpcG2) from Thermosynechococcus vestitus (strain NIES-2133 / IAM M-273 / BP-1).